A 206-amino-acid polypeptide reads, in one-letter code: Nucleoside triphosphate pyrophosphatase (206 aa).

The Proton acceptor role is filled by Asp71.

Belongs to the Maf family. Requires a divalent metal cation as cofactor.

The protein resides in the cytoplasm. It carries out the reaction a ribonucleoside 5'-triphosphate + H2O = a ribonucleoside 5'-phosphate + diphosphate + H(+). The enzyme catalyses a 2'-deoxyribonucleoside 5'-triphosphate + H2O = a 2'-deoxyribonucleoside 5'-phosphate + diphosphate + H(+). Nucleoside triphosphate pyrophosphatase. May have a dual role in cell division arrest and in preventing the incorporation of modified nucleotides into cellular nucleic acids. The chain is Nucleoside triphosphate pyrophosphatase from Rippkaea orientalis (strain PCC 8801 / RF-1) (Cyanothece sp. (strain PCC 8801)).